Reading from the N-terminus, the 349-residue chain is Histidinol-phosphate aminotransferase (349 aa).

Residues M1–T22 form a disordered region. K207 is subject to N6-(pyridoxal phosphate)lysine.

The protein belongs to the class-II pyridoxal-phosphate-dependent aminotransferase family. Histidinol-phosphate aminotransferase subfamily. In terms of assembly, homodimer. Pyridoxal 5'-phosphate is required as a cofactor.

The enzyme catalyses L-histidinol phosphate + 2-oxoglutarate = 3-(imidazol-4-yl)-2-oxopropyl phosphate + L-glutamate. It functions in the pathway amino-acid biosynthesis; L-histidine biosynthesis; L-histidine from 5-phospho-alpha-D-ribose 1-diphosphate: step 7/9. This chain is Histidinol-phosphate aminotransferase (hisC), found in Synechocystis sp. (strain ATCC 27184 / PCC 6803 / Kazusa).